The sequence spans 388 residues: Putative [LysW]-aminoadipate semialdehyde/glutamate semialdehyde transaminase (388 aa).

Residues Gly-100 to Thr-101 and Phe-127 each bind pyridoxal 5'-phosphate. Arg-130 provides a ligand contact to substrate. Residue Asp-211–Gln-214 coordinates pyridoxal 5'-phosphate. At Lys-240 the chain carries N6-(pyridoxal phosphate)lysine. Ser-268 lines the substrate pocket. Residue Thr-269 coordinates pyridoxal 5'-phosphate.

The protein belongs to the class-III pyridoxal-phosphate-dependent aminotransferase family. LysJ subfamily. In terms of assembly, homodimer. Requires pyridoxal 5'-phosphate as cofactor.

The protein localises to the cytoplasm. The enzyme catalyses [amino-group carrier protein]-C-terminal-gamma-(L-lysyl)-L-glutamate + 2-oxoglutarate = [amino-group carrier protein]-C-terminal-N-(1-carboxy-5-oxopentan-1-yl)-L-glutamine + L-glutamate. It catalyses the reaction [amino-group carrier protein]-C-terminal-gamma-(L-ornithyl)-L-glutamate + 2-oxoglutarate = [amino-group carrier protein]-C-terminal-gamma-(L-glutamyl-5-semialdehyde)-L-glutamate + L-glutamate. It functions in the pathway amino-acid biosynthesis; L-lysine biosynthesis via AAA pathway; L-lysine from L-alpha-aminoadipate (Thermus route): step 4/5. It participates in amino-acid biosynthesis; L-arginine biosynthesis. Functionally, involved in both the arginine and lysine biosynthetic pathways. The chain is Putative [LysW]-aminoadipate semialdehyde/glutamate semialdehyde transaminase from Aeropyrum pernix (strain ATCC 700893 / DSM 11879 / JCM 9820 / NBRC 100138 / K1).